The following is a 498-amino-acid chain: ATP synthase subunit beta, chloroplastic (498 aa).

172–179 (GGAGVGKT) is a binding site for ATP.

Belongs to the ATPase alpha/beta chains family. In terms of assembly, F-type ATPases have 2 components, CF(1) - the catalytic core - and CF(0) - the membrane proton channel. CF(1) has five subunits: alpha(3), beta(3), gamma(1), delta(1), epsilon(1). CF(0) has four main subunits: a(1), b(1), b'(1) and c(9-12).

Its subcellular location is the plastid. It is found in the chloroplast thylakoid membrane. The enzyme catalyses ATP + H2O + 4 H(+)(in) = ADP + phosphate + 5 H(+)(out). In terms of biological role, produces ATP from ADP in the presence of a proton gradient across the membrane. The catalytic sites are hosted primarily by the beta subunits. The chain is ATP synthase subunit beta, chloroplastic from Populus trichocarpa (Western balsam poplar).